A 63-amino-acid polypeptide reads, in one-letter code: Large ribosomal subunit protein uL29 (63 aa).

Belongs to the universal ribosomal protein uL29 family.

The sequence is that of Large ribosomal subunit protein uL29 from Vibrio campbellii (strain ATCC BAA-1116).